Reading from the N-terminus, the 306-residue chain is Glutathione transport system permease protein GsiC (306 aa).

At 1–8 the chain is on the cytoplasmic side; that stretch reads MLNYVLKR. Residues 9 to 29 traverse the membrane as a helical segment; sequence LLGLIPTLLIVAVLVFLFVHL. The Periplasmic portion of the chain corresponds to 30-102; it reads LPGDPARLIA…SRFLPTLWLT (73 aa). The 198-residue stretch at 95 to 292 folds into the ABC transmembrane type-1 domain; that stretch reads FLPTLWLTIT…LEFILINLVV (198 aa). Residues 103-123 traverse the membrane as a helical segment; that stretch reads ITSMIWAVLFGMAIGIAAAVW. At 124 to 134 the chain is on the cytoplasmic side; sequence RNRWPDRVGMT. A helical membrane pass occupies residues 135–155; it reads LAVTGISFPAFALGMLLMQIF. Topologically, residues 156–168 are periplasmic; that stretch reads SVDLGWLPTVGAD. A helical transmembrane segment spans residues 169-189; sequence SWQHYILPSLTLGAAVASVMA. The Cytoplasmic segment spans residues 190–228; the sequence is RFTRSSFVDVLSEDYMRTARAKGVSETWVVLKHGLRNAM. The chain crosses the membrane as a helical span at residues 229-249; that stretch reads IPVVTMMGLQFGFLLGGSIVV. Residues 250-278 are Periplasmic-facing; that stretch reads EKVFNWPGLGRLLVDSVDMRDYPVIQAEV. A helical membrane pass occupies residues 279 to 299; sequence LLFSLEFILINLVVDVLYAAI. Topologically, residues 300-306 are cytoplasmic; sequence NPAIRYK.

It belongs to the binding-protein-dependent transport system permease family. In terms of assembly, the complex is composed of two ATP-binding proteins (GsiA), two transmembrane proteins (GsiC and GsiD) and a solute-binding protein (GsiB).

The protein localises to the cell inner membrane. Its function is as follows. Part of the ABC transporter complex GsiABCD involved in glutathione import. Probably responsible for the translocation of the substrate across the membrane. This chain is Glutathione transport system permease protein GsiC, found in Salmonella choleraesuis (strain SC-B67).